The primary structure comprises 349 residues: MALAGAPVAARSPRAVQVWLYAVAALIVLMVVVGGATRLTESGLSITEWKPITGALPPLSEADWQAEFDRYKTIPQYEILNKGMGLEAFKTIYWWEWGHRLLGRVIGLAFFLPFLYFALTGALRGTLLARCFGLFLLGGLQGAVGWWMVASGLTEHTSVSQYRLAVHLTLACIILTAIVAVARSLSPLAAQALPARVRLTARVLVGLVLLQIFAGGLVAGLDAGMSFNTWPLMDGHLVPAAGQLGAMQPLWRNLFENAMTVQFVHRSIAYLIFALAFLHLLDCLRLGGTAARRATLVFALVAAQAMLGILTLVHMVPLDLALAHQLGATLVLIAAMIHASDSNRRQIVA.

5 consecutive transmembrane segments (helical) span residues 15 to 35, 101 to 121, 132 to 152, 162 to 182, and 203 to 223; these read AVQVWLYAVAALIVLMVVVGG, LLGRVIGLAFFLPFLYFALTG, FGLFLLGGLQGAVGWWMVASG, YRLAVHLTLACIILTAIVAVA, and VLVGLVLLQIFAGGLVAGLDA. Histidine 265 contributes to the heme binding site. Helical transmembrane passes span 268-288, 296-316, and 317-337; these read IAYLIFALAFLHLLDCLRLGG, LVFALVAAQAMLGILTLVHMV, and PLDLALAHQLGATLVLIAAMI. Histidine 324 is a binding site for heme.

Belongs to the COX15/CtaA family. Type 2 subfamily. As to quaternary structure, interacts with CtaB. Heme b is required as a cofactor.

The protein resides in the cell membrane. The catalysed reaction is Fe(II)-heme o + 2 A + H2O = Fe(II)-heme a + 2 AH2. It participates in porphyrin-containing compound metabolism; heme A biosynthesis; heme A from heme O: step 1/1. Functionally, catalyzes the conversion of heme O to heme A by two successive hydroxylations of the methyl group at C8. The first hydroxylation forms heme I, the second hydroxylation results in an unstable dihydroxymethyl group, which spontaneously dehydrates, resulting in the formyl group of heme A. The polypeptide is Heme A synthase (Azorhizobium caulinodans (strain ATCC 43989 / DSM 5975 / JCM 20966 / LMG 6465 / NBRC 14845 / NCIMB 13405 / ORS 571)).